The chain runs to 204 residues: Outer-membrane lipoprotein carrier protein (204 aa).

The N-terminal stretch at methionine 1–alanine 21 is a signal peptide.

Belongs to the LolA family. As to quaternary structure, monomer.

The protein localises to the periplasm. In terms of biological role, participates in the translocation of lipoproteins from the inner membrane to the outer membrane. Only forms a complex with a lipoprotein if the residue after the N-terminal Cys is not an aspartate (The Asp acts as a targeting signal to indicate that the lipoprotein should stay in the inner membrane). This chain is Outer-membrane lipoprotein carrier protein, found in Histophilus somni (strain 129Pt) (Haemophilus somnus).